The sequence spans 706 residues: Probable N(6)-adenosine-methyltransferase MT-A70-like (706 aa).

2 disordered regions span residues 64-114 (RPFV…VAAA) and 223-261 (TLPLLQPPPAPQMPPSETDAGSAMIPRTPQQQQPQPDMW). The segment covering 103–114 (SPGSSPASVAAA) has biased composition (low complexity). Positions 227-236 (LQPPPAPQMP) are enriched in pro residues. Residues 479-480 (DI) and Asp-497 contribute to the S-adenosyl-L-methionine site. The positively charged region required for RNA-binding stretch occupies residues 567–580 (RIIRTGRTGHWLNH). Residues Lys-614, 637–640 (RMHN), and 650–651 (NQ) each bind S-adenosyl-L-methionine. A disordered region spans residues 669-706 (AYPDSEVQPPSPPRASAPIDGDQGTSQKPTVSDGERPA).

Belongs to the MT-A70-like family.

It localises to the nucleus. It carries out the reaction an adenosine in mRNA + S-adenosyl-L-methionine = an N(6)-methyladenosine in mRNA + S-adenosyl-L-homocysteine + H(+). In terms of biological role, probable N6-methyltransferase that methylates adenosine residues of some mRNAs. N6-methyladenosine (m6A), which is present at internal sites of some mRNAs, may play a role in the efficiency of mRNA splicing, transport or translation. In Oryza sativa subsp. japonica (Rice), this protein is Probable N(6)-adenosine-methyltransferase MT-A70-like.